Reading from the N-terminus, the 262-residue chain is uncharacterized protein (262 aa).

The signal sequence occupies residues 1–22 (MMNNSITLLLALLVGLVGFAFT).

This sequence belongs to the IIV-6 117L family.

This is an uncharacterized protein from Aedes vexans (Inland floodwater mosquito).